A 238-amino-acid polypeptide reads, in one-letter code: MLLLPLLVLLCVVSVSSSGSQTCEETLKTCSVIACGRDGRDGPKGEKGEPGQGLRGLQGPPGKLGPPGSVGAPGSQGPKGQKGDRGDSRAIEVKLANMEAEINTLKSKLELTNKLHAFSMGKKSGKKFFVTNHERMPFSKVKALCSELRGTVAIPRNAEENKAIQEVAKTSAFLGITDEVTEGQFMYVTGGRLTYSNWKKDEPNDHGSGEDCVTIVDNGLWNDISCQASHTAVCEFPA.

The first 17 residues, 1–17, serve as a signal peptide directing secretion; the sequence is MLLLPLLVLLCVVSVSS. The segment covering 38 to 49 has biased composition (basic and acidic residues); that stretch reads DGRDGPKGEKGE. The disordered stretch occupies residues 38 to 87; sequence DGRDGPKGEKGEPGQGLRGLQGPPGKLGPPGSVGAPGSQGPKGQKGDRGD. One can recognise a Collagen-like domain in the interval 39-88; that stretch reads GRDGPKGEKGEPGQGLRGLQGPPGKLGPPGSVGAPGSQGPKGQKGDRGDS. Proline 43 is subject to 4-hydroxyproline. 5-hydroxylysine occurs at positions 44 and 47. O-linked (Gal...) hydroxylysine glycans are attached at residues lysine 44 and lysine 47. 4-hydroxyproline occurs at positions 50, 61, 67, 73, and 78. 5-hydroxylysine is present on residues lysine 79 and lysine 82. O-linked (Gal...) hydroxylysine glycans are attached at residues lysine 79 and lysine 82. The 96-residue stretch at 143–238 folds into the C-type lectin domain; that stretch reads ALCSELRGTV…SHTAVCEFPA (96 aa). 2 disulfide bridges follow: cysteine 145-cysteine 234 and cysteine 212-cysteine 226. 9 residues coordinate Ca(2+): aspartate 178, glutamate 182, glutamate 202, asparagine 204, aspartate 205, glutamate 210, aspartate 211, asparagine 222, and aspartate 223. The segment at 202–210 is calcium-dependent carbohydrate binding; it reads EPNDHGSGE.

As to quaternary structure, homotrimer. Forms higher oligomeric complexes formed by the association of two, three or more homotrimers. Oligomerization occurs in the endoplasmic reticulum. Interacts with MASP1 and MASP2. Hydroxylated on lysine and proline residues within the collagen-like domain. Post-translationally, O-glycosylated. O-linked glycans on hydroxylysine residues consist of Glc-Gal disaccharides bound to the oxygen atom of post-translationally added hydroxyl groups. In terms of tissue distribution, detected in blood serum (at protein level).

The protein resides in the secreted. Calcium-dependent lectin. Plays a role in the innate immune response by binding mannose, fucose and N-acetylglucosamine moieties on different microorganisms and mediating activation of the lectin complement pathway. Binds to late apoptotic cells, as well as to apoptotic blebs and to necrotic cells, but not to early apoptotic cells, facilitating their uptake by macrophages. In Rattus norvegicus (Rat), this protein is Mannose-binding protein A (Mbl1).